The following is a 1058-amino-acid chain: Bromodomain-containing protein 1 (1058 aa).

The span at 1-12 (MRRKGRCHRGSA) shows a compositional bias: basic residues. The tract at residues 1-26 (MRRKGRCHRGSAARHPSSPCSVKHSP) is disordered. Residues 31 to 80 (LTYAQAQRMVEIEIEGRLHRISIFDPLEIILEDDLTAQEMSECNSNKENS) form an interaction with KAT7/HBO1 and histones region. The disordered stretch occupies residues 92-116 (HKNNRVKKKNEALPSAHGTPASASA). Ser-128 bears the Phosphoserine mark. The PHD-type 1 zinc-finger motif lies at 214–264 (DAVCCICMDGECQNSNVILFCDMCNLAVHQECYGVPYIPEGQWLCRHCLQS). The C2HC pre-PHD-type zinc-finger motif lies at 268 to 301 (PADCVLCPNKGGAFKKTDDDRWGHVVCALWIPEV). Residues 325–389 (LTCYLCKQKG…RKTAYCDVHT (65 aa)) form a PHD-type 2 zinc finger. 3 positions are modified to N6-acetyllysine: Lys-368, Lys-516, and Lys-519. Residues Lys-554 and Lys-594 each participate in a glycyl lysine isopeptide (Lys-Gly) (interchain with G-Cter in SUMO2) cross-link. Positions 562–666 (LRLTPLTVLL…DQGGVVLRQA (105 aa)) constitute a Bromo domain. Disordered regions lie at residues 755–776 (LSQQHSQPLPTGPGLEGFEEDG) and 791–868 (LETL…DSSF). Ser-803 carries the phosphoserine modification. Low complexity predominate over residues 852 to 867 (SESSISSSNSPLCDSS). The residue at position 903 (Lys-903) is an N6-acetyllysine. Arg-906 bears the Phosphoserine mark. Residues 929 to 1012 (PLKVVWAKCS…KSKMVPLGID (84 aa)) form the PWWP domain. 2 positions are modified to phosphoserine: Ser-1052 and Ser-1055.

As to quaternary structure, component of some HBO1 complex composed of KAT7/HBO1, MEAF6, ING4 and BRD1/BRPF2. Component of the MOZ/MORF complex composed at least of ING5, KAT6A, KAT6B, MEAF6 and one of BRPF1, BRD1/BRPF2 and BRPF3. Interacts (via PHD-type zinc finger domain) with unmodified histone H3. Interacts (via PWWP domain) with dimethylated and trimethylated 'Lys-79' on histone H3. Highly expressed in testis.

It is found in the nucleus. It localises to the chromosome. Functionally, scaffold subunit of various histone acetyltransferase (HAT) complexes, such as the MOZ/MORF and HBO1 complexes, that acts as a regulator of hematopoiesis. Plays a key role in HBO1 complex by directing KAT7/HBO1 specificity towards histone H3 'Lys-14' acetylation (H3K14ac), thereby promoting erythroid differentiation. The sequence is that of Bromodomain-containing protein 1 from Homo sapiens (Human).